Reading from the N-terminus, the 291-residue chain is ATP synthase gamma chain (291 aa).

This sequence belongs to the ATPase gamma chain family. F-type ATPases have 2 components, CF(1) - the catalytic core - and CF(0) - the membrane proton channel. CF(1) has five subunits: alpha(3), beta(3), gamma(1), delta(1), epsilon(1). CF(0) has three main subunits: a, b and c.

The protein resides in the cell inner membrane. Produces ATP from ADP in the presence of a proton gradient across the membrane. The gamma chain is believed to be important in regulating ATPase activity and the flow of protons through the CF(0) complex. The polypeptide is ATP synthase gamma chain (Caulobacter vibrioides (strain NA1000 / CB15N) (Caulobacter crescentus)).